Consider the following 107-residue polypeptide: MTLEKTNRMNYLIDFYQALLTPKQRNYMSLYYLDDYSLGEIAEEFEVSRQAVYDNIKRTETMLEQYEEKLALFEKFEQRQQLLQTLKRQVELTDDVSATISALENLE.

Belongs to the UPF0122 family.

Functionally, might take part in the signal recognition particle (SRP) pathway. This is inferred from the conservation of its genetic proximity to ftsY/ffh. May be a regulatory protein. The chain is UPF0122 protein EAT1b_2891 from Exiguobacterium sp. (strain ATCC BAA-1283 / AT1b).